Consider the following 825-residue polypeptide: BEN domain-containing protein 3 (825 aa).

The span at 1–11 (MNSTEISEDVE) shows a compositional bias: acidic residues. Residues 1–35 (MNSTEISEDVEEVLKNNPVKAEGSDATLDCSRNSR) are disordered. A Glycyl lysine isopeptide (Lys-Gly) (interchain with G-Cter in SUMO); alternate cross-link involves residue Lys-20. A Glycyl lysine isopeptide (Lys-Gly) (interchain with G-Cter in SUMO1); alternate cross-link involves residue Lys-20. Lys-20 participates in a covalent cross-link: Glycyl lysine isopeptide (Lys-Gly) (interchain with G-Cter in SUMO2); alternate. Residues Lys-39, Lys-54, Lys-56, Lys-71, Lys-126, Lys-127, Lys-135, Lys-140, Lys-156, and Lys-174 each participate in a glycyl lysine isopeptide (Lys-Gly) (interchain with G-Cter in SUMO2) cross-link. Residues 52-122 (SSKRKQLDSD…EEEPSTEATV (71 aa)) are disordered. A Nuclear localization signal motif is present at residues 54–56 (KRK). A BEN 1 domain is found at 239 to 340 (PPPEYQLTAS…DFFSRFWAQR (102 aa)). Ser-376 carries the post-translational modification Phosphoserine. The BEN 2 domain occupies 384-484 (ASDHVVDTQD…DELEGLGLEG (101 aa)). Lys-424 is covalently cross-linked (Glycyl lysine isopeptide (Lys-Gly) (interchain with G-Cter in SUMO2)). A Phosphoserine modification is found at Ser-486. A Glycyl lysine isopeptide (Lys-Gly) (interchain with G-Cter in SUMO); alternate cross-link involves residue Lys-509. Lys-509 is covalently cross-linked (Glycyl lysine isopeptide (Lys-Gly) (interchain with G-Cter in SUMO2); alternate). Residue Lys-525 forms a Glycyl lysine isopeptide (Lys-Gly) (interchain with G-Cter in SUMO2) linkage. Residues 547–647 (GSDCLLSKEQ…ERCRRRDTEQ (101 aa)) enclose the BEN 3 domain. Lys-697 participates in a covalent cross-link: Glycyl lysine isopeptide (Lys-Gly) (interchain with G-Cter in SUMO2). The BEN 4 domain maps to 712-813 (VPSPYLLSDK…ERCRRPNRKK (102 aa)).

In terms of assembly, homooligomer, probably a homooctamer. Interacts with HDAC2 and HDAC3, but not HDAC1. Interacts with SALL4. Interacts with SMARCA5/SNF2H, BAZ2A/TIP5 and USP21. Interacts with the nucleosome remodeling and histone deacetylase (NuRD) repressor complex. Interacts (via BEN domains 1 and 3) with ERCC6L (via N-terminal TPR repeat); the interaction is direct. Post-translationally, sumoylated at Lys-20 by SUMO1 and at Lys-509 by SUMO1, SUMO2 and SUMO3. Sumoylation probably occurs sequentially, with that of Lys-20 preceding that of Lys-509. It does not alter association with heterochromatin, but is required for the repression of transcription.

Its subcellular location is the nucleus. The protein localises to the nucleolus. Transcriptional repressor which associates with the NoRC (nucleolar remodeling complex) complex and plays a key role in repressing rDNA transcription. The sumoylated form modulates the stability of the NoRC complex component BAZ2A/TIP5 by controlling its USP21-mediated deubiquitination. Binds to unmethylated major satellite DNA and is involved in the recruitment of the Polycomb repressive complex 2 (PRC2) to major satellites. Stimulates the ERCC6L translocase and ATPase activities. This chain is BEN domain-containing protein 3 (Bend3), found in Mus musculus (Mouse).